The sequence spans 557 residues: MPPEADGPQVLIAGAGPVGLTLAHELTRRRVRVRVIDRADGPATTSRALAVHPRTLEACHQMGLADALVARGRPVVHFTVHLRGRQLIRFDTNYGRLPTAYPFSLMLDQVRTEEILRERLAGLGVGIEWGVELADCAPCGDRVNAELRRDGRSEQVTVPWLVGADGSRSTVRERLGLRLVGDATQTWLNADVVLDADLSRDSNHLVHTGSGTVLLVPFPDPGKWRAVDTGYAGQGADPETVRRRLAGSLARGLGRPVAVSEPTWVSVFRVQQRMITAMRSGRCFVAGDAAHVHSPASGQGMNTGMQDAYNLAWKLADVVRGHAREELLDTYAAERIPVGGRLLSSTRTATALVALRNAVAPVAMPVGLSFLKAVRPLKRRVEHRIMAGMSGLALHYADSPLTYGTGDGAAGVHPGHLVACTEQDVARHPGLRALRQALTDPRWLLLLFADDGGAAELALRYGRAVQIRTVIPHEDEDGPALADPDDALRQTLGVPPGGWALIRPDGYLAAKGQRSGTTTLTARLQALHLLPEDTAPGAGDSAGRPAPDGTRRGVTTE.

FAD is bound by residues 9 to 38 (QVLIAGAGPVGLTLAHELTRRRVRVRVIDR) and 278 to 288 (MRSGRCFVAGD). The segment at 530–557 (LPEDTAPGAGDSAGRPAPDGTRRGVTTE) is disordered.

Belongs to the PheA/TfdB FAD monooxygenase family. Requires FAD as cofactor.

It carries out the reaction 6-methylpretetramide + NADPH + O2 + 2 H(+) = 4-hydroxy-6-methylpretetramide + NADP(+) + H2O. The catalysed reaction is 4-hydroxy-6-methylpretetramide + NADPH + O2 = 4-dedimethylamino-4-oxo-anhydrotetracycline + NADP(+) + H2O. The protein operates within antibiotic biosynthesis; oxytetracycline biosynthesis. In terms of biological role, involved in the biosynthesis of the tetracycline antibiotic, oxytetracycline. Catalyzes the double hydroxylation of 6-methylpretetramide to yield 4-keto-anhydrotetracycline, via the insertion of oxygen atoms at the C-12a and C-4 positions of 6-pretetramid. The chain is 6-methylpretetramide 4-monooxygenase from Streptomyces rimosus.